The chain runs to 207 residues: Large ribosomal subunit protein uL4 (207 aa).

The interval 52 to 76 (KNTSLVSGGGKKPWKQKGTGRARQG) is disordered.

It belongs to the universal ribosomal protein uL4 family. As to quaternary structure, part of the 50S ribosomal subunit.

In terms of biological role, one of the primary rRNA binding proteins, this protein initially binds near the 5'-end of the 23S rRNA. It is important during the early stages of 50S assembly. It makes multiple contacts with different domains of the 23S rRNA in the assembled 50S subunit and ribosome. Forms part of the polypeptide exit tunnel. This is Large ribosomal subunit protein uL4 from Myxococcus xanthus (strain DK1622).